The chain runs to 309 residues: Ribonuclease Z (309 aa).

Zn(2+) contacts are provided by H63, H65, D67, H68, H145, D216, and H274. D67 acts as the Proton acceptor in catalysis.

Belongs to the RNase Z family. In terms of assembly, homodimer. Zn(2+) serves as cofactor.

The enzyme catalyses Endonucleolytic cleavage of RNA, removing extra 3' nucleotides from tRNA precursor, generating 3' termini of tRNAs. A 3'-hydroxy group is left at the tRNA terminus and a 5'-phosphoryl group is left at the trailer molecule.. Zinc phosphodiesterase, which displays some tRNA 3'-processing endonuclease activity. Probably involved in tRNA maturation, by removing a 3'-trailer from precursor tRNA. This Streptococcus equi subsp. zooepidemicus (strain H70) protein is Ribonuclease Z.